Reading from the N-terminus, the 772-residue chain is Major capsid protein (772 aa).

Positions 593-772 are disordered; it reads GIAPGRSNAG…AAQADRAEGQ (180 aa). The span at 654 to 664 shows a compositional bias: gly residues; that stretch reads NRGGEAGGVTG. The span at 716–742 shows a compositional bias: pro residues; sequence PLPPAPGAAPPPPPGPPNGPPAGPPPS. A compositionally biased stretch (low complexity) spans 743–766; that stretch reads DDGSSNPAAPVPTAIHAPPAAAQA.

This sequence belongs to the totivirus major capsid protein family.

It is found in the virion. In terms of biological role, capsid protein self-assembles to form an icosahedral capsid with a T=2 symmetry, 40 nm in diameter, and consisting of 60 capsid proteins asymmetric dimers. The capsid encapsulates the genomic dsRNA and the polymerase and remains intact following cell entry to protect the dsRNA from degradation and to prevent unfavorable antiviral responses in the host cell during all the replication cycle of the virus. Nascent transcripts are transcribed within the structural confines of the virion and are extruded into the cytoplasm. Functionally, binds and removes 5' cap structures from cellular mRNA. The chain is Major capsid protein from Helminthosporium victoriae virus-190S (Hv190SV).